The chain runs to 164 residues: Dehydrin Rab16C (164 aa).

Positions 42–51 (MGGHHAGAGG) are enriched in gly residues. Residues 42–164 (MGGHHAGAGG…KIKEKLPGQH (123 aa)) form a disordered region. Residues 105 to 115 (GNNHQQQQMMG) are compositionally biased toward low complexity. A compositionally biased stretch (gly residues) spans 128-138 (GMTGAGTGTGV). The segment covering 147–164 (GEKKGFMDKIKEKLPGQH) has biased composition (basic and acidic residues).

It belongs to the plant dehydrin family.

In Oryza sativa subsp. indica (Rice), this protein is Dehydrin Rab16C (RAB16C).